The following is a 394-amino-acid chain: MLEFEQGFNHLATLKVIGVGGGGNNAVNRMIDHGMNNVEFIAINTDGQALNLSKAESKIQIGEKLTRGLGAGANPEIGKKAAEESREQIEDAIQGADMVFVTAGMGGGTGTGAAPVVAKIAKEMGALTVGVVTRPFGFEGRKRQTQAAAGVESMKAAVDTLIVIPNDRLLDIVDKSTPMMEAFKEADNVLRQGVQGISDLIAVSGEVNLDFADVKTIMSNQGSALMGIGVSSGENRAVEAAKKAISSPLLETSIVGAQGVLMNITGGESLSLFEAQEAADIVQDAADEDVNMIFGTVINPELQDEIVVTVIATGFEDKPSSQGRKATSTGFGSSVNSSSNHQSGASAKEDSFSAHTSHSQSSESVSERSHTTKDDDIPSFIRNREERRSRRTRR.

Residues glycine 21–asparagine 25, arginine 29, glycine 108–glycine 110, glutamate 139, arginine 143, asparagine 166, and aspartate 187 contribute to the GTP site. A disordered region spans residues aspartate 317–arginine 394. Low complexity-rich tracts occupy residues serine 328–serine 346 and serine 353–serine 364. Residues valine 365–arginine 388 show a composition bias toward basic and acidic residues.

Belongs to the FtsZ family. As to quaternary structure, homodimer. Polymerizes to form a dynamic ring structure in a strictly GTP-dependent manner. Interacts directly with several other division proteins.

Its subcellular location is the cytoplasm. Essential cell division protein that forms a contractile ring structure (Z ring) at the future cell division site. The regulation of the ring assembly controls the timing and the location of cell division. One of the functions of the FtsZ ring is to recruit other cell division proteins to the septum to produce a new cell wall between the dividing cells. Binds GTP and shows GTPase activity. This Staphylococcus epidermidis (strain ATCC 35984 / DSM 28319 / BCRC 17069 / CCUG 31568 / BM 3577 / RP62A) protein is Cell division protein FtsZ.